Reading from the N-terminus, the 196-residue chain is Small ribosomal subunit protein uS4c (196 aa).

The tract at residues 17 to 36 (ALPGLTRKTPKSGSNLKKKF) is disordered. The S4 RNA-binding domain maps to 89-169 (MRLDNILFRL…LPKHLTIDTL (81 aa)).

This sequence belongs to the universal ribosomal protein uS4 family. As to quaternary structure, part of the 30S ribosomal subunit. Contacts protein S5. The interaction surface between S4 and S5 is involved in control of translational fidelity.

The protein resides in the plastid. The protein localises to the chloroplast. Functionally, one of the primary rRNA binding proteins, it binds directly to 16S rRNA where it nucleates assembly of the body of the 30S subunit. In terms of biological role, with S5 and S12 plays an important role in translational accuracy. This chain is Small ribosomal subunit protein uS4c (rps4), found in Festuca gigantea (Giant fescue).